Here is a 204-residue protein sequence, read N- to C-terminus: Peptidyl-prolyl cis-trans isomerase CYP20-1 (204 aa).

An N-terminal signal peptide occupies residues 1-23; that stretch reads MASSVTLLLWSLLLLGTLSAIQA. Residues 38 to 201 enclose the PPIase cyclophilin-type domain; that stretch reads YFDVEIDGKA…SKVVIVDSGE (164 aa).

Belongs to the cyclophilin-type PPIase family. In terms of assembly, interacts with the PP2A A subunit PP2AA1/RCN1. As to expression, ubiquitous, mostly in aerial organs. Higher levels in leaf and buds, and lower levels in seedlings.

The protein resides in the endoplasmic reticulum. It localises to the secreted. The catalysed reaction is [protein]-peptidylproline (omega=180) = [protein]-peptidylproline (omega=0). Its activity is regulated as follows. Binds cyclosporin A (CsA). CsA mediates some of its effects via an inhibitory action on PPIase. Its function is as follows. PPIases accelerate the folding of proteins. It catalyzes the cis-trans isomerization of proline imidic peptide bonds in oligopeptides. Seems to be involved in root development. In Arabidopsis thaliana (Mouse-ear cress), this protein is Peptidyl-prolyl cis-trans isomerase CYP20-1 (CYP20-1).